A 121-amino-acid polypeptide reads, in one-letter code: Small ribosomal subunit protein bS16 (121 aa).

Residues 97–114 are compositionally biased toward basic and acidic residues; that stretch reads LAKAKTKDGDNDSSKAES. The disordered stretch occupies residues 97-121; that stretch reads LAKAKTKDGDNDSSKAESESNEAET.

This sequence belongs to the bacterial ribosomal protein bS16 family.

In Prochlorococcus marinus (strain MIT 9301), this protein is Small ribosomal subunit protein bS16.